The following is a 283-amino-acid chain: Ubiquinone biosynthesis protein COQ4, mitochondrial (283 aa).

Residues 1–25 (MAIAKSVRARAVGLRSLRVLCAQRS) constitute a mitochondrion transit peptide. 4 residues coordinate Zn(2+): His-166, Asp-167, His-170, and Glu-182.

Belongs to the COQ4 family. In terms of assembly, component of a multi-subunit COQ enzyme complex, composed of at least COQ3, COQ4, COQ5, COQ6, COQ7 and COQ9. It depends on Zn(2+) as a cofactor.

Its subcellular location is the mitochondrion inner membrane. The catalysed reaction is a 4-hydroxy-3-methoxy-5-(all-trans-polyprenyl)benzoate + H(+) = a 2-methoxy-6-(all-trans-polyprenyl)phenol + CO2. The protein operates within cofactor biosynthesis; ubiquinone biosynthesis. Functionally, lyase that catalyzes the C1-decarboxylation of 4-hydroxy-3-methoxy-5-(all-trans-polyprenyl)benzoic acid into 2-methoxy-6-(all-trans-polyprenyl)phenol during ubiquinone biosynthesis. The chain is Ubiquinone biosynthesis protein COQ4, mitochondrial from Coccidioides immitis (strain RS) (Valley fever fungus).